Here is a 475-residue protein sequence, read N- to C-terminus: Ribulose bisphosphate carboxylase large chain (475 aa).

The propeptide occupies 1 to 2 (MS). The residue at position 3 (proline 3) is an N-acetylproline. N6,N6,N6-trimethyllysine is present on lysine 14. Substrate contacts are provided by asparagine 123 and threonine 173. Catalysis depends on lysine 175, which acts as the Proton acceptor. Lysine 177 serves as a coordination point for substrate. Mg(2+)-binding residues include lysine 201, aspartate 203, and glutamate 204. Lysine 201 carries the post-translational modification N6-carboxylysine. Histidine 294 functions as the Proton acceptor in the catalytic mechanism. 3 residues coordinate substrate: arginine 295, histidine 327, and serine 379.

This sequence belongs to the RuBisCO large chain family. Type I subfamily. As to quaternary structure, heterohexadecamer of 8 large chains and 8 small chains; disulfide-linked. The disulfide link is formed within the large subunit homodimers. Requires Mg(2+) as cofactor. The disulfide bond which can form in the large chain dimeric partners within the hexadecamer appears to be associated with oxidative stress and protein turnover.

It localises to the plastid. The protein resides in the chloroplast. The catalysed reaction is 2 (2R)-3-phosphoglycerate + 2 H(+) = D-ribulose 1,5-bisphosphate + CO2 + H2O. The enzyme catalyses D-ribulose 1,5-bisphosphate + O2 = 2-phosphoglycolate + (2R)-3-phosphoglycerate + 2 H(+). Functionally, ruBisCO catalyzes two reactions: the carboxylation of D-ribulose 1,5-bisphosphate, the primary event in carbon dioxide fixation, as well as the oxidative fragmentation of the pentose substrate in the photorespiration process. Both reactions occur simultaneously and in competition at the same active site. The sequence is that of Ribulose bisphosphate carboxylase large chain from Pinus krempfii (Krempf's pine).